Reading from the N-terminus, the 120-residue chain is uncharacterized protein (120 aa).

It belongs to the HesB/IscA family.

This is an uncharacterized protein from Bacillus subtilis (strain 168).